The sequence spans 435 residues: Cytochrome c biogenesis protein Ccs1 (435 aa).

3 helical membrane-spanning segments follow: residues 17-37 (LSLS…GTII), 77-97 (NPCF…CTFS), and 163-183 (IAPI…LISL).

Belongs to the Ccs1/CcsB family. As to quaternary structure, may interact with CcsA.

It is found in the plastid. The protein localises to the chloroplast thylakoid membrane. Its function is as follows. Required during biogenesis of c-type cytochromes (cytochrome c6 and cytochrome f) at the step of heme attachment. The polypeptide is Cytochrome c biogenesis protein Ccs1 (Gracilaria tenuistipitata var. liui (Red alga)).